Consider the following 162-residue polypeptide: NADH-quinone oxidoreductase subunit I (162 aa).

2 consecutive 4Fe-4S ferredoxin-type domains span residues 52–82 and 93–122; these read LRRY…IEAG and VRYD…EGPN. [4Fe-4S] cluster contacts are provided by cysteine 62, cysteine 65, cysteine 68, cysteine 72, cysteine 102, cysteine 105, cysteine 108, and cysteine 112.

This sequence belongs to the complex I 23 kDa subunit family. NDH-1 is composed of 14 different subunits. Subunits NuoA, H, J, K, L, M, N constitute the membrane sector of the complex. [4Fe-4S] cluster is required as a cofactor.

It is found in the cell inner membrane. The enzyme catalyses a quinone + NADH + 5 H(+)(in) = a quinol + NAD(+) + 4 H(+)(out). NDH-1 shuttles electrons from NADH, via FMN and iron-sulfur (Fe-S) centers, to quinones in the respiratory chain. The immediate electron acceptor for the enzyme in this species is believed to be ubiquinone. Couples the redox reaction to proton translocation (for every two electrons transferred, four hydrogen ions are translocated across the cytoplasmic membrane), and thus conserves the redox energy in a proton gradient. This is NADH-quinone oxidoreductase subunit I from Afipia carboxidovorans (strain ATCC 49405 / DSM 1227 / KCTC 32145 / OM5) (Oligotropha carboxidovorans).